The following is a 162-amino-acid chain: Phosphopantetheine adenylyltransferase (162 aa).

A substrate-binding site is contributed by T14. Residues 14–15 (TF) and H22 contribute to the ATP site. Positions 46, 78, and 92 each coordinate substrate. Residues 93-95 (GLR), E103, and 128-134 (HSFISSS) each bind ATP.

It belongs to the bacterial CoaD family. As to quaternary structure, homohexamer. The cofactor is Mg(2+).

It is found in the cytoplasm. The catalysed reaction is (R)-4'-phosphopantetheine + ATP + H(+) = 3'-dephospho-CoA + diphosphate. It functions in the pathway cofactor biosynthesis; coenzyme A biosynthesis; CoA from (R)-pantothenate: step 4/5. Reversibly transfers an adenylyl group from ATP to 4'-phosphopantetheine, yielding dephospho-CoA (dPCoA) and pyrophosphate. This is Phosphopantetheine adenylyltransferase from Xylella fastidiosa (strain 9a5c).